Reading from the N-terminus, the 383-residue chain is Probable mannan endo-1,4-beta-mannosidase A (383 aa).

The signal sequence occupies residues 1–21 (MKLSNALLTLASLALANVSTA). A glycan (N-linked (GlcNAc...) asparagine) is linked at Asn17. Trp92 is a substrate binding site. A glycan (N-linked (GlcNAc...) asparagine) is linked at Asn194. A substrate-binding site is contributed by Asn205. The Proton donor role is filled by Glu206. An N-linked (GlcNAc...) asparagine glycan is attached at Asn263. Tyr281 lines the substrate pocket. Catalysis depends on Glu314, which acts as the Nucleophile. Position 344 (Trp344) interacts with substrate.

The protein belongs to the glycosyl hydrolase 5 (cellulase A) family.

It localises to the secreted. It catalyses the reaction Random hydrolysis of (1-&gt;4)-beta-D-mannosidic linkages in mannans, galactomannans and glucomannans.. Endo-1,4-mannanase, a crucial enzyme for depolymerization of seed galactomannans and wood galactoglucomannans. The chain is Probable mannan endo-1,4-beta-mannosidase A (manA) from Aspergillus niger (strain ATCC MYA-4892 / CBS 513.88 / FGSC A1513).